A 335-amino-acid polypeptide reads, in one-letter code: MAIVSSENRTCADEKLLALYQSWSYIASIVFNCLVPTISTYFLGRAIFQLCNQATIQYSTRILLIATILFAACHQVSYFAFKIDLLHTMFFKLDQPCFLQRSSYDCRFISIAQTTGVVGMALTGLAMSTDRALALTFPADYHKLKSVPRVVLSVFVFIVSFSTWFLLTMNDPLTGYLNHCGFYPSYSVANFQLMLDVILYLAIFNLIWDVILFYYARQQILWRRSYQFQKRYEARISLNCTQAVFVISICQCISNGANSGLMRLLMMIGTSITSVTYSSLLSLFYTAPYSCILLPILMMRISEYIREQRTIGILSLRSEKPGLEEHHQRMRAAWS.

Topologically, residues 1 to 22 (MAIVSSENRTCADEKLLALYQS) are extracellular. The chain crosses the membrane as a helical span at residues 23 to 43 (WSYIASIVFNCLVPTISTYFL). Residues 44-61 (GRAIFQLCNQATIQYSTR) lie on the Cytoplasmic side of the membrane. A helical membrane pass occupies residues 62–82 (ILLIATILFAACHQVSYFAFK). Over 83 to 107 (IDLLHTMFFKLDQPCFLQRSSYDCR) the chain is Extracellular. Residues 108–128 (FISIAQTTGVVGMALTGLAMS) form a helical membrane-spanning segment. Residues 129–149 (TDRALALTFPADYHKLKSVPR) are Cytoplasmic-facing. A helical membrane pass occupies residues 150–170 (VVLSVFVFIVSFSTWFLLTMN). At 171–192 (DPLTGYLNHCGFYPSYSVANFQ) the chain is on the extracellular side. A helical membrane pass occupies residues 193-213 (LMLDVILYLAIFNLIWDVILF). The Cytoplasmic portion of the chain corresponds to 214-235 (YYARQQILWRRSYQFQKRYEAR). The helical transmembrane segment at 236-255 (ISLNCTQAVFVISICQCISN) threads the bilayer. Topologically, residues 256 to 278 (GANSGLMRLLMMIGTSITSVTYS) are extracellular. A helical membrane pass occupies residues 279-299 (SLLSLFYTAPYSCILLPILMM). The Cytoplasmic segment spans residues 300–335 (RISEYIREQRTIGILSLRSEKPGLEEHHQRMRAAWS).

Belongs to the nematode receptor-like protein sra family.

It localises to the membrane. Its function is as follows. Chemosensory receptor that negatively regulates RAS/MAPK signaling during vulva induction and the negative regulation of olfaction of volitile attractants. Required for the suppression of vulval induction in response to food starvation. Signaling acts through the GPA-5 G-alpha protein subunit. The polypeptide is Serpentine receptor class alpha-13 (Caenorhabditis briggsae).